The primary structure comprises 454 residues: Aspartokinase 3 (454 aa).

2 ACT domains span residues 312–388 and 389–454; these read ISKY…ALIM and VVGE…VLIS.

The protein belongs to the aspartokinase family. Monomer.

It catalyses the reaction L-aspartate + ATP = 4-phospho-L-aspartate + ADP. The protein operates within amino-acid biosynthesis; L-lysine biosynthesis via DAP pathway; (S)-tetrahydrodipicolinate from L-aspartate: step 1/4. It participates in amino-acid biosynthesis; L-methionine biosynthesis via de novo pathway; L-homoserine from L-aspartate: step 1/3. Its pathway is amino-acid biosynthesis; L-threonine biosynthesis; L-threonine from L-aspartate: step 1/5. Its function is as follows. Catalyzes the phosphorylation of the beta-carboxyl group of aspartic acid with ATP to yield 4-phospho-L-aspartate, which is involved in the branched biosynthetic pathway leading to the biosynthesis of amino acids threonine, isoleucine and methionine. In Bacillus subtilis (strain 168), this protein is Aspartokinase 3 (yclM).